The following is a 474-amino-acid chain: tRNA-2-methylthio-N(6)-dimethylallyladenosine synthase (474 aa).

Positions 3-120 (KKLHIKTWGC…LPEMINHVQG (118 aa)) constitute an MTTase N-terminal domain. 6 residues coordinate [4Fe-4S] cluster: cysteine 12, cysteine 49, cysteine 83, cysteine 157, cysteine 161, and cysteine 164. The 233-residue stretch at 143-375 (RAEGPTAFVS…QQRITQQAME (233 aa)) folds into the Radical SAM core domain. The TRAM domain maps to 378 to 441 (REMVGTVQRI…ASSLRGILLR (64 aa)).

The protein belongs to the methylthiotransferase family. MiaB subfamily. As to quaternary structure, monomer. [4Fe-4S] cluster serves as cofactor.

It is found in the cytoplasm. It catalyses the reaction N(6)-dimethylallyladenosine(37) in tRNA + (sulfur carrier)-SH + AH2 + 2 S-adenosyl-L-methionine = 2-methylsulfanyl-N(6)-dimethylallyladenosine(37) in tRNA + (sulfur carrier)-H + 5'-deoxyadenosine + L-methionine + A + S-adenosyl-L-homocysteine + 2 H(+). Functionally, catalyzes the methylthiolation of N6-(dimethylallyl)adenosine (i(6)A), leading to the formation of 2-methylthio-N6-(dimethylallyl)adenosine (ms(2)i(6)A) at position 37 in tRNAs that read codons beginning with uridine. This chain is tRNA-2-methylthio-N(6)-dimethylallyladenosine synthase, found in Yersinia enterocolitica serotype O:8 / biotype 1B (strain NCTC 13174 / 8081).